The primary structure comprises 207 residues: Outer-membrane lipoprotein LolB (207 aa).

Positions 1–21 (MPLPDFRLIRLLPLAALVLTA) are cleaved as a signal peptide. C22 carries N-palmitoyl cysteine lipidation. Residue C22 is the site of S-diacylglycerol cysteine attachment.

The protein belongs to the LolB family. In terms of assembly, monomer.

It localises to the cell outer membrane. In terms of biological role, plays a critical role in the incorporation of lipoproteins in the outer membrane after they are released by the LolA protein. This Escherichia coli O7:K1 (strain IAI39 / ExPEC) protein is Outer-membrane lipoprotein LolB.